The primary structure comprises 330 residues: Biotin synthase (330 aa).

The region spanning 42-268 is the Radical SAM core domain; the sequence is YYGRKVKLNM…INPSKEIRIA (227 aa). [4Fe-4S] cluster contacts are provided by C60, C64, and C67. The [2Fe-2S] cluster site is built by C103, C136, C196, and R266.

This sequence belongs to the radical SAM superfamily. Biotin synthase family. Homodimer. Requires [4Fe-4S] cluster as cofactor. It depends on [2Fe-2S] cluster as a cofactor.

It carries out the reaction (4R,5S)-dethiobiotin + (sulfur carrier)-SH + 2 reduced [2Fe-2S]-[ferredoxin] + 2 S-adenosyl-L-methionine = (sulfur carrier)-H + biotin + 2 5'-deoxyadenosine + 2 L-methionine + 2 oxidized [2Fe-2S]-[ferredoxin]. The protein operates within cofactor biosynthesis; biotin biosynthesis; biotin from 7,8-diaminononanoate: step 2/2. Functionally, catalyzes the conversion of dethiobiotin (DTB) to biotin by the insertion of a sulfur atom into dethiobiotin via a radical-based mechanism. In Macrococcus caseolyticus (strain JCSC5402) (Macrococcoides caseolyticum), this protein is Biotin synthase.